We begin with the raw amino-acid sequence, 124 residues long: Small ribosomal subunit protein uS12 (124 aa).

Aspartate 89 bears the 3-methylthioaspartic acid mark.

This sequence belongs to the universal ribosomal protein uS12 family. As to quaternary structure, part of the 30S ribosomal subunit. Contacts proteins S8 and S17. May interact with IF1 in the 30S initiation complex.

Its function is as follows. With S4 and S5 plays an important role in translational accuracy. Interacts with and stabilizes bases of the 16S rRNA that are involved in tRNA selection in the A site and with the mRNA backbone. Located at the interface of the 30S and 50S subunits, it traverses the body of the 30S subunit contacting proteins on the other side and probably holding the rRNA structure together. The combined cluster of proteins S8, S12 and S17 appears to hold together the shoulder and platform of the 30S subunit. The sequence is that of Small ribosomal subunit protein uS12 from Leptospira biflexa serovar Patoc (strain Patoc 1 / Ames).